The following is a 185-amino-acid chain: Ribosome-recycling factor (185 aa).

The protein belongs to the RRF family.

Its subcellular location is the cytoplasm. Responsible for the release of ribosomes from messenger RNA at the termination of protein biosynthesis. May increase the efficiency of translation by recycling ribosomes from one round of translation to another. The polypeptide is Ribosome-recycling factor (Streptococcus pyogenes serotype M18 (strain MGAS8232)).